The sequence spans 88 residues: Putative defensin-like protein 256 (88 aa).

The N-terminal stretch at Met-1 to Ala-25 is a signal peptide. Cystine bridges form between Cys-30–Cys-46, Cys-36–Cys-53, and Cys-40–Cys-55.

It belongs to the DEFL family.

Its subcellular location is the secreted. This chain is Putative defensin-like protein 256, found in Arabidopsis thaliana (Mouse-ear cress).